Here is a 144-residue protein sequence, read N- to C-terminus: Large ribosomal subunit protein uL15 (144 aa).

The tract at residues 1-54 (MKLNTIKPAEGAKHARRRVGRGIGSGLGKTGGRGHKGQKSRAGGFHKVGFEGGQ) is disordered. The segment covering 21 to 31 (RGIGSGLGKTG) has biased composition (gly residues).

It belongs to the universal ribosomal protein uL15 family. As to quaternary structure, part of the 50S ribosomal subunit.

Its function is as follows. Binds to the 23S rRNA. The protein is Large ribosomal subunit protein uL15 of Methylobacillus flagellatus (strain ATCC 51484 / DSM 6875 / VKM B-1610 / KT).